A 224-amino-acid polypeptide reads, in one-letter code: Prolactin-2C3 (224 aa).

The signal sequence occupies residues 1-29 (MLPSSIQPCSWILLLLLVNSSLLWKNVAS). Asn-19 carries N-linked (GlcNAc...) asparagine glycosylation. Cys-33 and Cys-40 form a disulfide bridge. N-linked (GlcNAc...) asparagine glycosylation is found at Asn-57, Asn-75, and Asn-88. 2 disulfides stabilise this stretch: Cys-87-Cys-199 and Cys-216-Cys-224.

This sequence belongs to the somatotropin/prolactin family. Post-translationally, N-glycosylated and sialylated. In terms of tissue distribution, expressed in placenta and hair follicles, with highest expression levels detected in the outer root sheath and no expression detected in bulb. Expressed in placenta, skin wounds, keratinocytes and weakly in embryonic fibroblasts. Expressed in brain, cerebellum and in Neuro-2a cell line. Not detected in liver, kidney, ovary, pituitary gland and brain.

It localises to the secreted. The protein resides in the endoplasmic reticulum. May have a role in embryonic development. It is likely to provide a growth stimulus to target cells in maternal and fetal tissues during the development of the embryo at mid-gestation. May play a role during wound healing and in the hair follicle cycle as a growth factor and/or an angiogenesis factor. May play a role in microvilli formation and cell proliferation of neuroblastoma cells. This is Prolactin-2C3 (Prl2c3) from Mus musculus (Mouse).